Reading from the N-terminus, the 588-residue chain is Disabled homolog 1 (588 aa).

Residues 1–26 (MSTETELQVAVKTSAKKDSRKKGQDR) are disordered. Positions 15–26 (AKKDSRKKGQDR) are enriched in basic and acidic residues. The region spanning 36-189 (KGEGVRYKAK…CEQAVYQTIL (154 aa)) is the PID domain. 3 positions are modified to phosphotyrosine: Y198, Y220, and Y232. Disordered regions lie at residues 417–443 (LTPL…RQKM), 451–470 (FQMA…PSLT), and 502–588 (LTPV…QAGS). Positions 424-436 (PGTSDSTRSSPQT) are enriched in polar residues. Low complexity-rich tracts occupy residues 503–512 (TPVTSTTPST) and 520–534 (PRQS…SHAS). Phosphoserine; by CDK5 is present on S524. The span at 537 to 546 (TTDDIFEEGF) shows a compositional bias: acidic residues.

As to quaternary structure, associates with the SH2 domains of SRC, FYN and ABL. Interacts (phosphorylated on tyrosine residues) with CRK and CRKL (via respective SH2 domain). Interacts with SIAH1, LRP8 and VLDLR. Interacts with LRP1. Interacts with APLP1 (via NPXY motif). Interacts with DAB2IP. Interacts with ZSWIM8. Post-translationally, phosphorylated by FYN on Tyr-198 and Tyr-220 upon reelin induction in embryonic neurons. Also phosphorylated on Ser-524 independently of reelin signaling. In terms of processing, ubiquitinated by various cullin-5-RING E3 ubiquitin-protein ligase complexes (ECS complexes) following ligand-binding and phosphorylation, leading to its degradation. Ubiquitinated by the ECS(SOCS7) complex in the cortical plate of the developing cerebral cortex following ligand-binding and phosphorylation by FYN, leading to its degradation by the proteasome. Recognized by ZSWIM8 through a disorder targets misorder mechanism that eliminates misfolded DAB1 via ubiquitination and proteasomal degradation. As to expression, mainly expressed in brain.

The protein localises to the cytoplasm. In terms of biological role, signaling adapter of the reelin-mediated signaling pathway, which regulates the migration and differentiation of postmitotic neurons during brain development. Mediates intracellular transduction of Reelin signaling following reelin (RELN)-binding to its receptor: acts by docking proteins through its phosphotyrosine residues and PID domain. This Homo sapiens (Human) protein is Disabled homolog 1 (DAB1).